The primary structure comprises 185 residues: Threonylcarbamoyl-AMP synthase (185 aa).

One can recognise a YrdC-like domain in the interval 4–185 (SWRVQQAARE…LATGKVVRPS (182 aa)).

It belongs to the SUA5 family. TsaC subfamily.

It localises to the cytoplasm. The catalysed reaction is L-threonine + hydrogencarbonate + ATP = L-threonylcarbamoyladenylate + diphosphate + H2O. Its function is as follows. Required for the formation of a threonylcarbamoyl group on adenosine at position 37 (t(6)A37) in tRNAs that read codons beginning with adenine. Catalyzes the conversion of L-threonine, HCO(3)(-)/CO(2) and ATP to give threonylcarbamoyl-AMP (TC-AMP) as the acyladenylate intermediate, with the release of diphosphate. The polypeptide is Threonylcarbamoyl-AMP synthase (Pseudomonas fluorescens (strain ATCC BAA-477 / NRRL B-23932 / Pf-5)).